The primary structure comprises 585 residues: 3-hydroxy-3-methylglutaryl-coenzyme A reductase 1 (585 aa).

2 helical membrane-spanning segments follow: residues 38–58 (LYLT…FLLC) and 77–97 (EIVA…FFGI). The interval 98 to 169 (DFVQSLVLRP…DEMPVTVMTE (72 aa)) is linker. The catalytic stretch occupies residues 170–585 (EDEEIIRSVV…SSKDVSKVSS (416 aa)). The active-site Charge relay system is glutamate 264. A glycan (N-linked (GlcNAc...) asparagine) is linked at asparagine 328. Lysine 396 acts as the Charge relay system in catalysis. An N-linked (GlcNAc...) asparagine glycan is attached at asparagine 441. Aspartate 472 (charge relay system) is an active-site residue. Histidine 570 acts as the Proton donor in catalysis. Asparagine 574 carries N-linked (GlcNAc...) asparagine glycosylation.

It belongs to the HMG-CoA reductase family.

It is found in the endoplasmic reticulum membrane. The protein resides in the mitochondrion membrane. The protein localises to the plastid membrane. The catalysed reaction is (R)-mevalonate + 2 NADP(+) + CoA = (3S)-3-hydroxy-3-methylglutaryl-CoA + 2 NADPH + 2 H(+). The protein operates within metabolic intermediate biosynthesis; (R)-mevalonate biosynthesis; (R)-mevalonate from acetyl-CoA: step 3/3. In terms of biological role, catalyzes the synthesis of mevalonate. The specific precursor of all isoprenoid compounds present in plants. The chain is 3-hydroxy-3-methylglutaryl-coenzyme A reductase 1 (HMG1) from Gossypium hirsutum (Upland cotton).